A 416-amino-acid chain; its full sequence is Gamma-glutamyl phosphate reductase (416 aa).

It belongs to the gamma-glutamyl phosphate reductase family.

The protein resides in the cytoplasm. The enzyme catalyses L-glutamate 5-semialdehyde + phosphate + NADP(+) = L-glutamyl 5-phosphate + NADPH + H(+). It participates in amino-acid biosynthesis; L-proline biosynthesis; L-glutamate 5-semialdehyde from L-glutamate: step 2/2. Functionally, catalyzes the NADPH-dependent reduction of L-glutamate 5-phosphate into L-glutamate 5-semialdehyde and phosphate. The product spontaneously undergoes cyclization to form 1-pyrroline-5-carboxylate. The sequence is that of Gamma-glutamyl phosphate reductase from Leptospira borgpetersenii serovar Hardjo-bovis (strain JB197).